A 385-amino-acid chain; its full sequence is 1-deoxy-D-xylulose 5-phosphate reductoisomerase (385 aa).

The NADPH site is built by T10, G11, S12, I13, G36, N38, and N122. K123 lines the 1-deoxy-D-xylulose 5-phosphate pocket. E124 is a binding site for NADPH. Mn(2+) is bound at residue D148. Residues S149, E150, S174, and H197 each contribute to the 1-deoxy-D-xylulose 5-phosphate site. E150 provides a ligand contact to Mn(2+). Residue G203 participates in NADPH binding. Residues S210, N215, K216, and E219 each contribute to the 1-deoxy-D-xylulose 5-phosphate site. Residue E219 coordinates Mn(2+).

The protein belongs to the DXR family. Mg(2+) serves as cofactor. Requires Mn(2+) as cofactor.

It catalyses the reaction 2-C-methyl-D-erythritol 4-phosphate + NADP(+) = 1-deoxy-D-xylulose 5-phosphate + NADPH + H(+). Its pathway is isoprenoid biosynthesis; isopentenyl diphosphate biosynthesis via DXP pathway; isopentenyl diphosphate from 1-deoxy-D-xylulose 5-phosphate: step 1/6. In terms of biological role, catalyzes the NADPH-dependent rearrangement and reduction of 1-deoxy-D-xylulose-5-phosphate (DXP) to 2-C-methyl-D-erythritol 4-phosphate (MEP). In Citrifermentans bemidjiense (strain ATCC BAA-1014 / DSM 16622 / JCM 12645 / Bem) (Geobacter bemidjiensis), this protein is 1-deoxy-D-xylulose 5-phosphate reductoisomerase.